Consider the following 637-residue polypeptide: Chaperone protein HtpG (637 aa).

Positions 1 to 345 are a; substrate-binding; it reads MSQQETHGFQ…SNDLPLNVSR (345 aa). The b stretch occupies residues 346-562; that stretch reads EILQDNHVTK…DGEMSTQMIK (217 aa). The c stretch occupies residues 563–637; it reads LMQAAGQPVP…MNQMLLANMK (75 aa).

Belongs to the heat shock protein 90 family. Homodimer.

Its subcellular location is the cytoplasm. Functionally, molecular chaperone. Has ATPase activity. The protein is Chaperone protein HtpG of Shewanella baltica (strain OS155 / ATCC BAA-1091).